Consider the following 185-residue polypeptide: Adenine phosphoribosyltransferase (185 aa).

This sequence belongs to the purine/pyrimidine phosphoribosyltransferase family. Homodimer.

Its subcellular location is the cytoplasm. It catalyses the reaction AMP + diphosphate = 5-phospho-alpha-D-ribose 1-diphosphate + adenine. It participates in purine metabolism; AMP biosynthesis via salvage pathway; AMP from adenine: step 1/1. Its function is as follows. Catalyzes a salvage reaction resulting in the formation of AMP, that is energically less costly than de novo synthesis. The polypeptide is Adenine phosphoribosyltransferase (Arthrobacter sp. (strain FB24)).